The following is a 205-amino-acid chain: Large ribosomal subunit protein uL18 (205 aa).

It belongs to the universal ribosomal protein uL18 family. Part of the 50S ribosomal subunit. Contacts the 5S and 23S rRNAs.

Functionally, this is one of the proteins that bind and probably mediate the attachment of the 5S RNA into the large ribosomal subunit, where it forms part of the central protuberance. The chain is Large ribosomal subunit protein uL18 from Pyrobaculum islandicum (strain DSM 4184 / JCM 9189 / GEO3).